Here is a 1372-residue protein sequence, read N- to C-terminus: DNA-directed RNA polymerase subunit beta (1372 aa).

Belongs to the RNA polymerase beta chain family. As to quaternary structure, the RNAP catalytic core consists of 2 alpha, 1 beta, 1 beta' and 1 omega subunit. When a sigma factor is associated with the core the holoenzyme is formed, which can initiate transcription.

The catalysed reaction is RNA(n) + a ribonucleoside 5'-triphosphate = RNA(n+1) + diphosphate. In terms of biological role, DNA-dependent RNA polymerase catalyzes the transcription of DNA into RNA using the four ribonucleoside triphosphates as substrates. The chain is DNA-directed RNA polymerase subunit beta from Nitratidesulfovibrio vulgaris (strain DP4) (Desulfovibrio vulgaris).